Consider the following 74-residue polypeptide: ATP synthase subunit 9, mitochondrial (74 aa).

2 helical membrane-spanning segments follow: residues 8-28 (IGAGAATIASAGAAIGIGNVF) and 50-70 (ILGFALTEAIALFAPMMAFLI).

It belongs to the ATPase C chain family. As to quaternary structure, F-type ATPases have 2 components, CF(1) - the catalytic core - and CF(0) - the membrane proton channel. CF(1) has five subunits: alpha(3), beta(3), gamma(1), delta(1), epsilon(1). CF(0) has three main subunits: a, b and c.

The protein resides in the mitochondrion membrane. In terms of biological role, this protein is one of the chains of the nonenzymatic membrane component (F0) of mitochondrial ATPase. This Brassica napus (Rape) protein is ATP synthase subunit 9, mitochondrial (ATP9).